Consider the following 183-residue polypeptide: MSALRQVMCRSTASLQLYQANRAAAARWASTATDGGPLDPKTALARPEELEQRNKLSGKITVPTAVNLSPISGVPEEHIRERRVRIHIPPKNAMQSGTDNVNTWQIEFDNRERWENPLMGWASSGDPLSNMNVQFGSPEEAITFCERNGWRWYVDGAAKPKKERVKNYGINFAWNKRTRVSTK.

The transit peptide at 1–28 (MSALRQVMCRSTASLQLYQANRAAAARW) directs the protein to the mitochondrion. S181 carries the phosphoserine modification.

It belongs to the complex I NDUFS4 subunit family.

It is found in the mitochondrion inner membrane. Functionally, accessory subunit of the mitochondrial membrane respiratory chain NADH dehydrogenase (Complex I), that is believed not to be involved in catalysis. Complex I functions in the transfer of electrons from NADH to the respiratory chain. The immediate electron acceptor for the enzyme is believed to be ubiquinone. In Drosophila melanogaster (Fruit fly), this protein is NADH dehydrogenase [ubiquinone] iron-sulfur protein 4, mitochondrial.